The following is a 277-amino-acid chain: Shikimate dehydrogenase (NADP(+)) (277 aa).

Shikimate is bound by residues 15–17 (SLS) and T62. The Proton acceptor role is filled by K66. Positions 87 and 102 each coordinate shikimate. Residues 127 to 131 (GAGGA), 151 to 156 (NRTVDK), and I219 each bind NADP(+). A shikimate-binding site is contributed by Y221. G242 is a binding site for NADP(+).

This sequence belongs to the shikimate dehydrogenase family. In terms of assembly, homodimer.

It carries out the reaction shikimate + NADP(+) = 3-dehydroshikimate + NADPH + H(+). It functions in the pathway metabolic intermediate biosynthesis; chorismate biosynthesis; chorismate from D-erythrose 4-phosphate and phosphoenolpyruvate: step 4/7. Functionally, involved in the biosynthesis of the chorismate, which leads to the biosynthesis of aromatic amino acids. Catalyzes the reversible NADPH linked reduction of 3-dehydroshikimate (DHSA) to yield shikimate (SA). The chain is Shikimate dehydrogenase (NADP(+)) from Bacillus cereus (strain 03BB102).